A 396-amino-acid chain; its full sequence is Phosphoglycerate kinase (396 aa).

Substrate contacts are provided by residues 21–23 (DFN), Arg36, 59–62 (HLGK), Arg119, and Arg156. ATP is bound by residues Lys206, Gly294, Glu325, and 352 to 355 (GGDS).

It belongs to the phosphoglycerate kinase family. As to quaternary structure, monomer.

It localises to the cytoplasm. The catalysed reaction is (2R)-3-phosphoglycerate + ATP = (2R)-3-phospho-glyceroyl phosphate + ADP. It functions in the pathway carbohydrate degradation; glycolysis; pyruvate from D-glyceraldehyde 3-phosphate: step 2/5. This is Phosphoglycerate kinase from Staphylococcus aureus (strain USA300).